The primary structure comprises 420 residues: Tubulin-specific chaperone C (420 aa).

The stretch at 9–142 (NNNNDEENSK…QIDKSKEKYM (134 aa)) forms a coiled coil. A compositionally biased stretch (basic and acidic residues) spans 31-49 (KQRLQSKLEKREISNKEQI). Disordered regions lie at residues 31–52 (KQRL…IDQS), 138–193 (KEKY…NNNK), and 222–257 (EIGN…NNNN). Low complexity-rich tracts occupy residues 172–192 (ETFN…NNNN) and 228–257 (INNN…NNNN). Residues 216–366 (PPKKEEEIGN…LKQQQQQQQQ (151 aa)) form the C-CAP/cofactor C-like domain.

The protein belongs to the TBCC family. In terms of assembly, supercomplex made of cofactors A to E. Cofactors A and D function by capturing and stabilizing tubulin in a quasi-native conformation. Cofactor E binds to the cofactor D-tubulin complex; interaction with cofactor C then causes the release of tubulin polypeptides that are committed to the native state.

In terms of biological role, tubulin-folding protein; involved in the final step of the tubulin folding pathway. The polypeptide is Tubulin-specific chaperone C (tbcc) (Dictyostelium discoideum (Social amoeba)).